The sequence spans 149 residues: Large ribosomal subunit protein eL24A (149 aa).

Basic and acidic residues-rich tracts occupy residues Lys-93–Ala-102 and Lys-116–Ala-125. Positions Lys-93–His-149 are disordered.

The protein belongs to the eukaryotic ribosomal protein eL24 family. As to quaternary structure, component of the large ribosomal subunit (LSU). Mature yeast ribosomes consist of a small (40S) and a large (60S) subunit. The 40S small subunit contains 1 molecule of ribosomal RNA (18S rRNA) and at least 33 different proteins. The large 60S subunit contains 3 rRNA molecules (25S, 5.8S and 5S rRNA) and at least 46 different proteins.

It localises to the cytoplasm. Component of the ribosome, a large ribonucleoprotein complex responsible for the synthesis of proteins in the cell. The small ribosomal subunit (SSU) binds messenger RNAs (mRNAs) and translates the encoded message by selecting cognate aminoacyl-transfer RNA (tRNA) molecules. The large subunit (LSU) contains the ribosomal catalytic site termed the peptidyl transferase center (PTC), which catalyzes the formation of peptide bonds, thereby polymerizing the amino acids delivered by tRNAs into a polypeptide chain. The nascent polypeptides leave the ribosome through a tunnel in the LSU and interact with protein factors that function in enzymatic processing, targeting, and the membrane insertion of nascent chains at the exit of the ribosomal tunnel. The sequence is that of Large ribosomal subunit protein eL24A (rpl2401) from Schizosaccharomyces pombe (strain 972 / ATCC 24843) (Fission yeast).